The sequence spans 686 residues: Probable metal-nicotianamine transporter YSL10 (686 aa).

14 helical membrane-spanning segments follow: residues 36–56 (VTLR…VIVM), 60–80 (LTTG…FFLL), 109–129 (CVVA…IFAM), 151–171 (LGWM…SVVP), 212–232 (MLGK…FYTG), 271–291 (LVNI…WPLI), 316–336 (VFIS…KVMT), 383–403 (IPNW…IATV), 415–435 (VAVS…GCGL), 461–481 (GGII…STAS), 501–521 (FVSQ…VFWL), 556–576 (GSLP…AIAV), 597–617 (MAIP…GSLI), and 639–659 (GLIC…LAGV).

Belongs to the YSL (TC 2.A.67.2) family.

The protein resides in the membrane. Its function is as follows. May be involved in the transport of nicotianamine-chelated metals. The chain is Probable metal-nicotianamine transporter YSL10 (YSL10) from Oryza sativa subsp. japonica (Rice).